A 474-amino-acid polypeptide reads, in one-letter code: tRNA-2-methylthio-N(6)-dimethylallyladenosine synthase (474 aa).

Positions Lys-3–Gly-120 constitute an MTTase N-terminal domain. The [4Fe-4S] cluster site is built by Cys-12, Cys-49, Cys-83, Cys-157, Cys-161, and Cys-164. A Radical SAM core domain is found at Arg-143–Glu-375. The TRAM domain occupies Arg-378–Arg-441.

Belongs to the methylthiotransferase family. MiaB subfamily. Monomer. Requires [4Fe-4S] cluster as cofactor.

It is found in the cytoplasm. The enzyme catalyses N(6)-dimethylallyladenosine(37) in tRNA + (sulfur carrier)-SH + AH2 + 2 S-adenosyl-L-methionine = 2-methylsulfanyl-N(6)-dimethylallyladenosine(37) in tRNA + (sulfur carrier)-H + 5'-deoxyadenosine + L-methionine + A + S-adenosyl-L-homocysteine + 2 H(+). Functionally, catalyzes the methylthiolation of N6-(dimethylallyl)adenosine (i(6)A), leading to the formation of 2-methylthio-N6-(dimethylallyl)adenosine (ms(2)i(6)A) at position 37 in tRNAs that read codons beginning with uridine. In Yersinia pestis bv. Antiqua (strain Angola), this protein is tRNA-2-methylthio-N(6)-dimethylallyladenosine synthase.